A 234-amino-acid polypeptide reads, in one-letter code: Thymidylate kinase (234 aa).

10 to 17 (GGEGSGKT) lines the ATP pocket.

It belongs to the thymidylate kinase family.

It carries out the reaction dTMP + ATP = dTDP + ADP. Phosphorylation of dTMP to form dTDP in both de novo and salvage pathways of dTTP synthesis. The protein is Thymidylate kinase of Cyanothece sp. (strain PCC 7425 / ATCC 29141).